The following is a 194-amino-acid chain: Fe/S biogenesis protein NfuA (194 aa).

Residues Cys151 and Cys154 each coordinate [4Fe-4S] cluster.

The protein belongs to the NfuA family. Homodimer. [4Fe-4S] cluster serves as cofactor.

Its function is as follows. Involved in iron-sulfur cluster biogenesis. Binds a 4Fe-4S cluster, can transfer this cluster to apoproteins, and thereby intervenes in the maturation of Fe/S proteins. Could also act as a scaffold/chaperone for damaged Fe/S proteins. In Vibrio vulnificus (strain CMCP6), this protein is Fe/S biogenesis protein NfuA.